The sequence spans 61 residues: UPF0370 protein SG1720 (61 aa).

A helical membrane pass occupies residues 3–23 (WLADYWWVVLLVLAGMLIGGV). Positions 37-47 (NRPELPPHRDN) are enriched in basic and acidic residues. A disordered region spans residues 37–61 (NRPELPPHRDNNAQWDEEDDWPKKP). A compositionally biased stretch (acidic residues) spans 51-61 (WDEEDDWPKKP).

Belongs to the UPF0370 family.

It localises to the cell membrane. This Sodalis glossinidius (strain morsitans) protein is UPF0370 protein SG1720.